A 578-amino-acid chain; its full sequence is A-type ATP synthase subunit A (578 aa).

228-235 contributes to the ATP binding site; the sequence is GPFGSGKT.

It belongs to the ATPase alpha/beta chains family. As to quaternary structure, has multiple subunits with at least A(3), B(3), C, D, E, F, H, I and proteolipid K(x).

The protein resides in the cell membrane. The catalysed reaction is ATP + H2O + 4 H(+)(in) = ADP + phosphate + 5 H(+)(out). Component of the A-type ATP synthase that produces ATP from ADP in the presence of a proton gradient across the membrane. The A chain is the catalytic subunit. In Methanosarcina barkeri (strain Fusaro / DSM 804), this protein is A-type ATP synthase subunit A.